A 167-amino-acid chain; its full sequence is Gametocyte-specific factor 1 homolog (167 aa).

2 consecutive CHHC U11-48K-type zinc fingers follow at residues 1-28 (MVYC…RVIY) and 34-61 (LMVC…EDRN). Residues cysteine 4, histidine 10, histidine 20, cysteine 24, cysteine 37, histidine 43, histidine 53, and cysteine 57 each coordinate Zn(2+). Positions 128 to 161 (EKRRHFGEDYEEEKKPRKAKARADLRPTPYEHRR) are enriched in basic and acidic residues. The disordered stretch occupies residues 128-167 (EKRRHFGEDYEEEKKPRKAKARADLRPTPYEHRRPYSRRQ).

It belongs to the UPF0224 (FAM112) family. As to quaternary structure, interacts with piwi.

It localises to the nucleus. Its function is as follows. Acts via the piwi-interacting RNA (piRNA) pathway which mediates the repression of transposable elements during meiosis by forming complexes composed of piRNAs and piwi proteins and governs the methylation and subsequent repression of transposons. Required for repression of transposons and neighboring genes in ovarian somatic and germline cells. This is Gametocyte-specific factor 1 homolog from Drosophila melanogaster (Fruit fly).